The primary structure comprises 428 residues: GTPase Obg (428 aa).

Residues 1-158 (MFVDQTKIDV…RTLRLELKVL (158 aa)) form the Obg domain. Residues 159–328 (ADVGLVGFPS…LMGKTADLVE (170 aa)) enclose the OBG-type G domain. Residues 165–172 (GFPSVGKS), 190–194 (FTTLT), 212–215 (DLPG), 282–285 (TQMD), and 309–311 (SSV) contribute to the GTP site. Mg(2+) is bound by residues S172 and T192. One can recognise an OCT domain in the interval 350–428 (YKKPEDEGFK…IADFTFEFVD (79 aa)).

Belongs to the TRAFAC class OBG-HflX-like GTPase superfamily. OBG GTPase family. In terms of assembly, monomer. It depends on Mg(2+) as a cofactor.

The protein localises to the cytoplasm. In terms of biological role, an essential GTPase which binds GTP, GDP and possibly (p)ppGpp with moderate affinity, with high nucleotide exchange rates and a fairly low GTP hydrolysis rate. Plays a role in control of the cell cycle, stress response, ribosome biogenesis and in those bacteria that undergo differentiation, in morphogenesis control. The protein is GTPase Obg of Lactobacillus johnsonii (strain CNCM I-12250 / La1 / NCC 533).